Consider the following 405-residue polypeptide: Deoxyguanosinetriphosphate triphosphohydrolase-like protein (405 aa).

An HD domain is found at 75–219; that stretch reads RLTHTIEVAQ…AAIADDIAYN (145 aa).

It belongs to the dGTPase family. Type 2 subfamily.

In Rhizobium meliloti (strain 1021) (Ensifer meliloti), this protein is Deoxyguanosinetriphosphate triphosphohydrolase-like protein.